The following is a 999-amino-acid chain: MTNFRLNVLAYSVMLGLTASVAYAEPTNQPTNQPTNQPTNQPTNQPTNQNSNASEQLEQINVLGSDNNNDNTPPKIAETVKTASQLKRQQVQDSRDLVRYETGVTVVEAGRFGSSGYAIRGVDENRVAITVDGLHQAETLSSQGFKELFEGYGNFNNTRNSVEIETLKVAKIAKGADSVKVGSGSLGGAVLFETKDARDFLTEKDWHIGYKAGYSTADNQGLNAVTLAGRYQMFDALIMHSKRHGHELENYDYKNGRDIQGKEREKADPYTITKESTLVKFSFSPTENHRFTVASDTYLQHSRGHDFSYNLVKTTYINKDEEELRHTNDLTKRKNVSFTYENYTVTPFWDTLKLSYSQQRITTRARTEDYCDGNEKCDSYKNPLGLQLKEGKVVDRNGDPVELKLVEDEQGQKRHQVVDKYNNPFSVASGTNNDAFVGKQLSPSEFWLDCSIFNCDKPVRVYKYQYSNQEPESKEVELNRTMEINGKKFATYESNNYRDRYHMILPNSKGYLPLDYKERDLNTKTKQINLDLTKAFTLFEIENELSYGGVYAKTTKEMVNKAGYYGRNPTWWAERTLGKSLLNGLRTCKEDSSYNGLLCPRHEPKTSFLIPVETTTKSLYFADNIKLHNMLSVDLGYRYDDIKYQPEYIPGVTPKIADDMVRELFVPLPPANGKDWQGNPVYTPEQIRKNAEENIAYIAQEKRFKKHSYSLGATFDPLNFLRVQVKYSKGFRTPTSDELYFTFKHPDFTILPNPNMKPEEAKNQEIALTFHHDWGFFSTNVFQTKYRQFIDLAYLGSRNLSNSVGGQAQARDFQVYQNVNVDRAKVKGVEINSRLNIGYFFEKLDGFNVSYKFTYQRGRLDGNRPMNAIQPKTSVIGLGYDHKEQRFGADLYVTHVSAKKAKDTYNMFYKEQGYKDSAVRWRSDDYTLVDFVTYIKPVKNVTLQFGVYNLTDRKYLTWESARSIKPFGTSNLINQGTGAGINRFYSPGRNYKLSAEITF.

Positions 1-24 are cleaved as a signal peptide; it reads MTNFRLNVLAYSVMLGLTASVAYA. Residues 25-52 form a disordered region; the sequence is EPTNQPTNQPTNQPTNQPTNQPTNQNSN. Repeat copies occupy residues 26–29, 30–33, 34–37, 38–41, 42–45, and 46–49. A 6 X 4 AA tandem repeats of P-T-N-Q region spans residues 26-49; that stretch reads PTNQPTNQPTNQPTNQPTNQPTNQ. Positions 26–50 are enriched in low complexity; sequence PTNQPTNQPTNQPTNQPTNQPTNQN. Residues 58 to 65 carry the TonB box motif; sequence EQINVLGS. The 128-residue stretch at 68–195 folds into the TBDR plug domain; sequence NNDNTPPKIA…LGGAVLFETK (128 aa). The TBDR beta-barrel domain maps to 203–999; the sequence is EKDWHIGYKA…NYKLSAEITF (797 aa). The TonB C-terminal box signature appears at 982–999; it reads NRFYSPGRNYKLSAEITF.

This sequence belongs to the TonB-dependent receptor family. Hemoglobin/haptoglobin binding protein subfamily.

It is found in the cell outer membrane. Acts as a receptor for hemoglobin or the hemoglobin/haptoglobin complex of the human host and is required for heme uptake. The polypeptide is Probable hemoglobin and hemoglobin-haptoglobin-binding protein 4 (Haemophilus influenzae (strain ATCC 51907 / DSM 11121 / KW20 / Rd)).